The chain runs to 137 residues: Large ribosomal subunit protein uL16 (137 aa).

Belongs to the universal ribosomal protein uL16 family. As to quaternary structure, part of the 50S ribosomal subunit.

Its function is as follows. Binds 23S rRNA and is also seen to make contacts with the A and possibly P site tRNAs. The sequence is that of Large ribosomal subunit protein uL16 from Rhodopseudomonas palustris (strain ATCC BAA-98 / CGA009).